We begin with the raw amino-acid sequence, 215 residues long: Large ribosomal subunit protein bL25 (215 aa).

Residues 170–215 (DPDTSVASVTPPTTEEDLDTDDVDENAEPELVGAENDSADEESENK) are disordered. Acidic residues-rich tracts occupy residues 183–197 (TEEDLDTDDVDENAE) and 206–215 (DSADEESENK).

The protein belongs to the bacterial ribosomal protein bL25 family. CTC subfamily. Part of the 50S ribosomal subunit; part of the 5S rRNA/L5/L18/L25 subcomplex. Contacts the 5S rRNA. Binds to the 5S rRNA independently of L5 and L18.

In terms of biological role, this is one of the proteins that binds to the 5S RNA in the ribosome where it forms part of the central protuberance. The protein is Large ribosomal subunit protein bL25 of Oceanobacillus iheyensis (strain DSM 14371 / CIP 107618 / JCM 11309 / KCTC 3954 / HTE831).